We begin with the raw amino-acid sequence, 363 residues long: Ribosome-binding ATPase YchF (363 aa).

One can recognise an OBG-type G domain in the interval Phe3 to Leu256. Asn12–Thr17 serves as a coordination point for ATP. Residues Ser16 and Thr36 each contribute to the Mg(2+) site. The 84-residue stretch at Asn278–Phe361 folds into the TGS domain.

This sequence belongs to the TRAFAC class OBG-HflX-like GTPase superfamily. OBG GTPase family. YchF/OLA1 subfamily. Mg(2+) serves as cofactor.

ATPase that binds to both the 70S ribosome and the 50S ribosomal subunit in a nucleotide-independent manner. The sequence is that of Ribosome-binding ATPase YchF from Haemophilus ducreyi (strain 35000HP / ATCC 700724).